A 445-amino-acid chain; its full sequence is Histidinol dehydrogenase (445 aa).

Residues Y138, Q199, and N222 each coordinate NAD(+). Residues S245, Q267, and H270 each coordinate substrate. Residues Q267 and H270 each contribute to the Zn(2+) site. Catalysis depends on proton acceptor residues E335 and H336. H336, D369, E423, and H428 together coordinate substrate. D369 contributes to the Zn(2+) binding site. H428 provides a ligand contact to Zn(2+).

Belongs to the histidinol dehydrogenase family. The cofactor is Zn(2+).

It carries out the reaction L-histidinol + 2 NAD(+) + H2O = L-histidine + 2 NADH + 3 H(+). Its pathway is amino-acid biosynthesis; L-histidine biosynthesis; L-histidine from 5-phospho-alpha-D-ribose 1-diphosphate: step 9/9. Catalyzes the sequential NAD-dependent oxidations of L-histidinol to L-histidinaldehyde and then to L-histidine. This Burkholderia pseudomallei (strain 1710b) protein is Histidinol dehydrogenase.